Reading from the N-terminus, the 199-residue chain is Recombination protein RecR (199 aa).

Residues 56–71 (CATCGNVAQEELCNIC) form a C4-type zinc finger. Positions 79–174 (SVICVVEEPK…KVTRLASGLP (96 aa)) constitute a Toprim domain.

Belongs to the RecR family.

May play a role in DNA repair. It seems to be involved in an RecBC-independent recombinational process of DNA repair. It may act with RecF and RecO. The sequence is that of Recombination protein RecR from Streptomyces avermitilis (strain ATCC 31267 / DSM 46492 / JCM 5070 / NBRC 14893 / NCIMB 12804 / NRRL 8165 / MA-4680).